Consider the following 962-residue polypeptide: Leucine--tRNA ligase (962 aa).

Positions 68–79 match the 'HIGH' region motif; the sequence is PYPSGAGLHVGH. The disordered stretch occupies residues 559 to 582; the sequence is DYSPRTFDPDDANTSPETPLSRNE. The segment covering 570–579 has biased composition (polar residues); it reads ANTSPETPLS. A 'KMSKS' region motif is present at residues 733–737; it reads KMGKS. Lysine 736 contributes to the ATP binding site.

The protein belongs to the class-I aminoacyl-tRNA synthetase family.

Its subcellular location is the cytoplasm. It carries out the reaction tRNA(Leu) + L-leucine + ATP = L-leucyl-tRNA(Leu) + AMP + diphosphate. The polypeptide is Leucine--tRNA ligase (Streptomyces avermitilis (strain ATCC 31267 / DSM 46492 / JCM 5070 / NBRC 14893 / NCIMB 12804 / NRRL 8165 / MA-4680)).